Consider the following 439-residue polypeptide: Protein disulfide-isomerase A6 (439 aa).

Positions 1–19 are cleaved as a signal peptide; it reads MARLGFGLVSCTFFLAASG. 2 consecutive Thioredoxin domains span residues 20–133 and 151–287; these read LYSS…ALRQ and QGRG…EDVA. Catalysis depends on nucleophile residues Cys-55 and Cys-58. Cys-55 and Cys-58 are joined by a disulfide. A phosphoserine mark is found at Ser-129, Ser-156, and Ser-158. Residues 141-160 are disordered; it reads GRSGGYSSGKQGRGDSSSKK. Active-site nucleophile residues include Cys-190 and Cys-193. The cysteines at positions 190 and 193 are disulfide-linked. The disordered stretch occupies residues 400–425; the sequence is GSFPAITAREPWDGRDGELPVEDDID. The residue at position 427 (Ser-427) is a Phosphoserine. The Prevents secretion from ER motif lies at 436 to 439; that stretch reads KDEL.

Belongs to the protein disulfide isomerase family. Part of a large chaperone multiprotein complex comprising DNAJB11, HSP90B1, HSPA5, HYOU, PDIA2, PDIA4, PDIA6, PPIB, SDF2L1, UGGT1 and very small amounts of ERP29, but not, or at very low levels, CALR nor CANX. Interacts with MICA on the surface of tumor cells, leading to MICA disulfide bond reduction which is required for its release from tumor cells. Interacts with ITGB3 following platelet stimulation. Interacts with ERN1; the interaction is direct. Interacts with EIF2AK3. In terms of tissue distribution, expressed most abundantly in lung and kidney, followed by heart, liver and brain.

It is found in the endoplasmic reticulum lumen. The protein resides in the cell membrane. The protein localises to the melanosome. It carries out the reaction Catalyzes the rearrangement of -S-S- bonds in proteins.. May function as a chaperone that inhibits aggregation of misfolded proteins. Negatively regulates the unfolded protein response (UPR) through binding to UPR sensors such as ERN1, which in turn inactivates ERN1 signaling. May also regulate the UPR via the EIF2AK3 UPR sensor. Plays a role in platelet aggregation and activation by agonists such as convulxin, collagen and thrombin. This is Protein disulfide-isomerase A6 (PDIA6) from Mesocricetus auratus (Golden hamster).